A 307-amino-acid chain; its full sequence is Nitrogenase iron protein 2 (307 aa).

Residue 13–20 coordinates ATP; that stretch reads GKGGIGKS. Position 101 (Cys-101) interacts with [4Fe-4S] cluster. ADP-ribosylarginine; by dinitrogenase reductase ADP-ribosyltransferase is present on Arg-104. Position 135 (Cys-135) interacts with [4Fe-4S] cluster. Residues 285–307 are disordered; sequence QLTETDKAAKESEKKQEDAEGEA.

The protein belongs to the NifH/BchL/ChlL family. As to quaternary structure, homodimer. The cofactor is [4Fe-4S] cluster. Post-translationally, the reversible ADP-ribosylation of Arg-104 inactivates the nitrogenase reductase and regulates nitrogenase activity.

It carries out the reaction N2 + 8 reduced [2Fe-2S]-[ferredoxin] + 16 ATP + 16 H2O = H2 + 8 oxidized [2Fe-2S]-[ferredoxin] + 2 NH4(+) + 16 ADP + 16 phosphate + 6 H(+). Its function is as follows. The key enzymatic reactions in nitrogen fixation are catalyzed by the nitrogenase complex, which has 2 components: the iron protein and the molybdenum-iron protein. The polypeptide is Nitrogenase iron protein 2 (nifH2) (Mastigocladus laminosus (Fischerella sp.)).